Here is a 100-residue protein sequence, read N- to C-terminus: Large ribosomal subunit protein bL21 (100 aa).

Belongs to the bacterial ribosomal protein bL21 family. As to quaternary structure, part of the 50S ribosomal subunit. Contacts proteins L15 and L20.

In terms of biological role, binds directly to 23S rRNA, probably serving to organize its structure. The protein is Large ribosomal subunit protein bL21 of Deinococcus radiodurans (strain ATCC 13939 / DSM 20539 / JCM 16871 / CCUG 27074 / LMG 4051 / NBRC 15346 / NCIMB 9279 / VKM B-1422 / R1).